A 707-amino-acid polypeptide reads, in one-letter code: Ribosomal RNA large subunit methyltransferase K/L (707 aa).

The 112-residue stretch at 43–154 (QIYRCCLWSR…KDKAILGVDM (112 aa)) folds into the THUMP domain.

It belongs to the methyltransferase superfamily. RlmKL family.

The protein resides in the cytoplasm. The enzyme catalyses guanosine(2445) in 23S rRNA + S-adenosyl-L-methionine = N(2)-methylguanosine(2445) in 23S rRNA + S-adenosyl-L-homocysteine + H(+). It catalyses the reaction guanosine(2069) in 23S rRNA + S-adenosyl-L-methionine = N(2)-methylguanosine(2069) in 23S rRNA + S-adenosyl-L-homocysteine + H(+). Its function is as follows. Specifically methylates the guanine in position 2445 (m2G2445) and the guanine in position 2069 (m7G2069) of 23S rRNA. This is Ribosomal RNA large subunit methyltransferase K/L from Vibrio campbellii (strain ATCC BAA-1116).